The following is a 146-amino-acid chain: UPF0756 membrane protein PTH_1817 (146 aa).

4 consecutive transmembrane segments (helical) span residues 6-26 (LLIGMAAHSSLIVIAACILLI), 46-66 (MGLTFLLLSILVPLASGKASW), 69-89 (IISSLASFSGLLAVAGGALAT), and 105-125 (IVFGLLLGSILGIVFLHGIPV).

The protein belongs to the UPF0756 family.

It localises to the cell membrane. The chain is UPF0756 membrane protein PTH_1817 from Pelotomaculum thermopropionicum (strain DSM 13744 / JCM 10971 / SI).